The primary structure comprises 989 residues: Serine-repeat antigen protein 5 (989 aa).

The signal sequence occupies residues 1-16 (MKSYISLFFILCVIFN). Disordered stretches follow at residues 26–91 (SQTG…EKQD) and 165–245 (LPSN…RNLQ). Low complexity-rich tracts occupy residues 52-87 (QGSTGASQPGSSEPSNPVSSGHSVSTVSVSQTSTSS), 167-180 (SNGTTGEQGSSTGT), and 191-225 (SSSSSSSSSSSSSSSSSSSSSSSSSSSSSSSSSSS). The residue at position 167 (Ser167) is a Phosphoserine. Residue Asn168 is glycosylated (N-linked (GlcNAc...) asparagine). Residues 208–245 (SSSSSSSSSSSSSSSSSSESLPANGPDSPTVKPPRNLQ) are interaction with PTKL. Residue Asn310 is glycosylated (N-linked (GlcNAc...) asparagine). Residues 365–382 (YKYLSEDIVSNFKEIKAE) form an interaction with host VTN region. A disulfide bridge connects residues Cys437 and Cys489. At Thr541 the chain carries Phosphothreonine. 5 cysteine pairs are disulfide-bonded: Cys559–Cys564, Cys573–Cys602, Cys585–Cys628, Cys619–Cys664, and Cys747–Cys801. The segment at 571 to 989 (NNCISNLQVE…TNNECYFCYV (419 aa)) is thiol-protease-like. Active-site residues include His754 and Asn779. Asn820 is a glycosylation site (N-linked (GlcNAc...) asparagine). The propeptide at 835–878 (KASPEFYHNLYFKNFNVGKKNLFSEKEDNENNKKLGNNYIIFGQ) is inhibition peptide. Ser858 is subject to Phosphoserine.

It belongs to the peptidase C1 family. In terms of assembly, may interact (via C-terminus) with PTKL (via SAM domain). As to quaternary structure, interacts (via C-terminus) with human VTN (via hemopexin repeat 2); may form heterotetramers of two VTN and SERA5 P47 heterodimers; the interaction may protect merozoites from phagocytosis by host monocytes; VTN glycosylation appears to be dispensable for the interaction. Monomer. Interacts with kinase CPK1/CDPK1 at the schizont stage. Phosphorylation by CPK1/CDPK1 increases SERA5 protease activity towards a synthetic peptide in vitro. In terms of processing, just prior to merozoite egress from host erythrocytes, proteolytically cleaved into multiple fragments. Cleaved by SUB1 into p47 and p73, p73 is further cleaved by SUB1 into p56 and p18 and p56 is further processed into p50 by an unidentified protease. p47 remains covalently associated with p18 via disulfide bond. p47 can be processed into p25n and p25c by SUB1. p25c and p25n remain associated with p18. Proteolytic processing is essential for merozoite egress from host erythrocytes. The cleavage of the propeptide to produce p50 is necessary for protease activity and to promote merozoite egress.

It is found in the parasitophorous vacuole. Its subcellular location is the secreted. The protein resides in the cell membrane. In terms of biological role, plays an essential role during the asexual blood stage development by controlling the kinetics of merozoite egress from host erythrocytes. Specifically, prevents premature rupture of the parasitophorous vacuole and host erythrocyte membranes. May prevent merozoite phagocytosis by host monocytes via interaction with host VTN at the merozoite surface. Plays a role in parasite growth. Its function is as follows. Protease activity is controversial. This Plasmodium falciparum (isolate CDC / Honduras) protein is Serine-repeat antigen protein 5.